Reading from the N-terminus, the 331-residue chain is 6-phosphogluconolactonase (331 aa).

It belongs to the cycloisomerase 2 family.

The enzyme catalyses 6-phospho-D-glucono-1,5-lactone + H2O = 6-phospho-D-gluconate + H(+). The protein operates within carbohydrate degradation; pentose phosphate pathway; D-ribulose 5-phosphate from D-glucose 6-phosphate (oxidative stage): step 2/3. Its function is as follows. Catalyzes the hydrolysis of 6-phosphogluconolactone to 6-phosphogluconate. The protein is 6-phosphogluconolactonase of Salmonella paratyphi A (strain ATCC 9150 / SARB42).